Consider the following 193-residue polypeptide: Imidazoleglycerol-phosphate dehydratase (193 aa).

It belongs to the imidazoleglycerol-phosphate dehydratase family.

Its subcellular location is the cytoplasm. It carries out the reaction D-erythro-1-(imidazol-4-yl)glycerol 3-phosphate = 3-(imidazol-4-yl)-2-oxopropyl phosphate + H2O. The protein operates within amino-acid biosynthesis; L-histidine biosynthesis; L-histidine from 5-phospho-alpha-D-ribose 1-diphosphate: step 6/9. This chain is Imidazoleglycerol-phosphate dehydratase, found in Saccharolobus islandicus (strain M.16.27) (Sulfolobus islandicus).